Here is a 410-residue protein sequence, read N- to C-terminus: LL-diaminopimelate aminotransferase (410 aa).

Residues Tyr15 and Gly42 each coordinate substrate. Pyridoxal 5'-phosphate is bound by residues Tyr72, 108 to 109, Tyr132, Asn187, Tyr218, and 246 to 248; these read SK and SFS. Positions 109, 132, and 187 each coordinate substrate. An N6-(pyridoxal phosphate)lysine modification is found at Lys249. Pyridoxal 5'-phosphate-binding residues include Arg257 and Asn292. The substrate site is built by Asn292 and Arg388.

The protein belongs to the class-I pyridoxal-phosphate-dependent aminotransferase family. LL-diaminopimelate aminotransferase subfamily. In terms of assembly, homodimer. Pyridoxal 5'-phosphate serves as cofactor.

The catalysed reaction is (2S,6S)-2,6-diaminopimelate + 2-oxoglutarate = (S)-2,3,4,5-tetrahydrodipicolinate + L-glutamate + H2O + H(+). It functions in the pathway amino-acid biosynthesis; L-lysine biosynthesis via DAP pathway; LL-2,6-diaminopimelate from (S)-tetrahydrodipicolinate (aminotransferase route): step 1/1. In terms of biological role, involved in the synthesis of meso-diaminopimelate (m-DAP or DL-DAP), required for both lysine and peptidoglycan biosynthesis. Catalyzes the direct conversion of tetrahydrodipicolinate to LL-diaminopimelate. In Syntrophotalea carbinolica (strain DSM 2380 / NBRC 103641 / GraBd1) (Pelobacter carbinolicus), this protein is LL-diaminopimelate aminotransferase.